The following is a 643-amino-acid chain: Fructose-1,6-bisphosphatase class 3 (643 aa).

Belongs to the FBPase class 3 family. Mn(2+) is required as a cofactor.

It catalyses the reaction beta-D-fructose 1,6-bisphosphate + H2O = beta-D-fructose 6-phosphate + phosphate. The protein operates within carbohydrate biosynthesis; gluconeogenesis. The chain is Fructose-1,6-bisphosphatase class 3 from Streptococcus agalactiae serotype Ia (strain ATCC 27591 / A909 / CDC SS700).